Reading from the N-terminus, the 232-residue chain is uncharacterized protein (232 aa).

The segment covering 86 to 95 (RGLPRPEFKA) has biased composition (basic and acidic residues). The disordered stretch occupies residues 86–107 (RGLPRPEFKANGHPSMDAEADD).

This is an uncharacterized protein from Sinorhizobium fredii (strain NBRC 101917 / NGR234).